We begin with the raw amino-acid sequence, 504 residues long: MEKIDFRNKINWHRRYRSPQGVKSEHEILRIFESDRGRIINSPAIRRLQQKTQVFPLERNAAVRTRLTHSLEVQQVGRYIAKEVLSRLKEQGLLEAYGLSELTGPFESIVEMSCLMHDIGNPPFGHFGEAAINDWFSQRLFPADAENLPVSQDRCTVQTLRLQEGEEALNALRGNVRRDLCHFEGNAQGIRLVHTLLRMNLTWAQVGGILKYSRPAWHHGPVPETHSYLMKKPGFYLSEDQYISRLRKELQLDTYSRFPLAWIMEAADDISYCVADLEDAVEKRIFSVEQLYQHLYDAWGEHAPGDLFNLVVQNAWDKSGTNQLHHSAEDQFFMYLRVNTLNRLAPYAAQRFIDNLPDVFNGSFNHALLEDDSPYSRLLELYKNVAVRHVFNHPDVEQLELQGYRVISGLLDIYSPLLALTLAQFRELVEKESVRSLPIESRLYHKLSSRHRLAYIEAVSHLHPQAADFPVWEYYYRCRLIQDYISGMTDLYAWDEYRKLMAVE.

The HD domain maps to arginine 66 to cysteine 273.

It belongs to the dGTPase family. Type 1 subfamily. In terms of assembly, homotetramer. Requires Mg(2+) as cofactor.

It carries out the reaction dGTP + H2O = 2'-deoxyguanosine + triphosphate + H(+). Functionally, dGTPase preferentially hydrolyzes dGTP over the other canonical NTPs. The protein is Deoxyguanosinetriphosphate triphosphohydrolase of Cronobacter sakazakii (strain ATCC BAA-894) (Enterobacter sakazakii).